The following is a 117-amino-acid chain: Large ribosomal subunit protein bL20 (117 aa).

It belongs to the bacterial ribosomal protein bL20 family.

Its function is as follows. Binds directly to 23S ribosomal RNA and is necessary for the in vitro assembly process of the 50S ribosomal subunit. It is not involved in the protein synthesizing functions of that subunit. This chain is Large ribosomal subunit protein bL20, found in Magnetococcus marinus (strain ATCC BAA-1437 / JCM 17883 / MC-1).